The primary structure comprises 693 residues: Glycine--tRNA ligase beta subunit (693 aa).

Belongs to the class-II aminoacyl-tRNA synthetase family. In terms of assembly, tetramer of two alpha and two beta subunits.

Its subcellular location is the cytoplasm. The catalysed reaction is tRNA(Gly) + glycine + ATP = glycyl-tRNA(Gly) + AMP + diphosphate. The sequence is that of Glycine--tRNA ligase beta subunit from Vibrio vulnificus (strain CMCP6).